Reading from the N-terminus, the 686-residue chain is Translation initiation factor IF-2 (686 aa).

A disordered region spans residues 53-105 (EKPSVADEFEVEEKVVRSKKNSNKKKKKGKGNEDKRQENFAGRQQTQTVETPD). Residues 69–81 (RSKKNSNKKKKKG) are compositionally biased toward basic residues. One can recognise a tr-type G domain in the interval 188–357 (ERPAVVTIMG…LLVSEVEEYK (170 aa)). Positions 197–204 (GHVDHGKT) are G1. 197–204 (GHVDHGKT) is a binding site for GTP. Residues 222-226 (GITQH) are G2. Residues 243 to 246 (DTPG) form a G3 region. Residues 243–247 (DTPGH) and 297–300 (NKMD) contribute to the GTP site. The tract at residues 297–300 (NKMD) is G4. The tract at residues 333 to 335 (SAI) is G5.

The protein belongs to the TRAFAC class translation factor GTPase superfamily. Classic translation factor GTPase family. IF-2 subfamily.

The protein localises to the cytoplasm. Functionally, one of the essential components for the initiation of protein synthesis. Protects formylmethionyl-tRNA from spontaneous hydrolysis and promotes its binding to the 30S ribosomal subunits. Also involved in the hydrolysis of GTP during the formation of the 70S ribosomal complex. This chain is Translation initiation factor IF-2, found in Bacillus cereus (strain ATCC 10987 / NRS 248).